A 485-amino-acid chain; its full sequence is UDP-N-acetylmuramoyl-L-alanyl-D-glutamate--2,6-diaminopimelate ligase (485 aa).

Serine 30 is a UDP-N-acetyl-alpha-D-muramoyl-L-alanyl-D-glutamate binding site. 111–117 is a binding site for ATP; it reads GTNGKTT. UDP-N-acetyl-alpha-D-muramoyl-L-alanyl-D-glutamate is bound by residues 153 to 154, serine 180, glutamine 186, and arginine 188; that span reads TT. At lysine 220 the chain carries N6-carboxylysine. Residues arginine 378, 402–405, glycine 455, and glutamate 459 each bind meso-2,6-diaminopimelate; that span reads DNPR. A Meso-diaminopimelate recognition motif motif is present at residues 402 to 405; sequence DNPR.

Belongs to the MurCDEF family. MurE subfamily. Mg(2+) serves as cofactor. Post-translationally, carboxylation is probably crucial for Mg(2+) binding and, consequently, for the gamma-phosphate positioning of ATP.

The protein resides in the cytoplasm. It carries out the reaction UDP-N-acetyl-alpha-D-muramoyl-L-alanyl-D-glutamate + meso-2,6-diaminopimelate + ATP = UDP-N-acetyl-alpha-D-muramoyl-L-alanyl-gamma-D-glutamyl-meso-2,6-diaminopimelate + ADP + phosphate + H(+). It participates in cell wall biogenesis; peptidoglycan biosynthesis. Its function is as follows. Catalyzes the addition of meso-diaminopimelic acid to the nucleotide precursor UDP-N-acetylmuramoyl-L-alanyl-D-glutamate (UMAG) in the biosynthesis of bacterial cell-wall peptidoglycan. This Bacteroides fragilis (strain ATCC 25285 / DSM 2151 / CCUG 4856 / JCM 11019 / LMG 10263 / NCTC 9343 / Onslow / VPI 2553 / EN-2) protein is UDP-N-acetylmuramoyl-L-alanyl-D-glutamate--2,6-diaminopimelate ligase.